The primary structure comprises 514 residues: F-box-like/WD repeat-containing protein TBL1XR1 (514 aa).

Ser2 bears the N-acetylserine mark. The LisH domain maps to 4–36 (SSDEVNFLVYRYLQESGFSHSAFTFGIESHISQ). The region spanning 41 to 86 (GALVPPAALISIIQKGLQYVEAEVSINEDGTLFDGRPIESLSLIDA) is the F-box-like domain. An N6-acetyllysine modification is found at Lys102. Ser119 is modified (phosphoserine). Residues 120–135 (QQGSAKNGENTANGEE) are compositionally biased toward low complexity. Residues 120-139 (QQGSAKNGENTANGEENGAH) are disordered. 8 WD repeats span residues 167–206 (GHES…TSGS), 223–262 (PSNK…ASTL), 264–303 (QHKG…AKQQ), 306–344 (FHSA…PIKT), 347–386 (GHTN…CVHD), 389–437 (AHNK…CIHT), 440–479 (KHQE…LVHS), and 481–513 (RGTG…LDLR). Residue Lys277 forms a Glycyl lysine isopeptide (Lys-Gly) (interchain with G-Cter in SUMO2) linkage.

Belongs to the WD repeat EBI family. In terms of assembly, component of the N-Cor repressor complex, at least composed of NCOR1, NCOR2, HDAC3, TBL1X, TBL1XR1, CORO2A and GPS2. Probable component of some E3 ubiquitin ligase complex. Interacts with histones H2B and H4. Interacts with MECP2; bridges interaction between MECP2 and NCOR1. Interacts with USP44. Widely expressed including the pituitary, hypothalamus, white and brown adipose tissue, muscle and liver.

Its subcellular location is the nucleus. Its function is as follows. F-box-like protein involved in the recruitment of the ubiquitin/19S proteasome complex to nuclear receptor-regulated transcription units. Plays an essential role in transcription activation mediated by nuclear receptors. Probably acts as integral component of the N-Cor corepressor complex that mediates the recruitment of the 19S proteasome complex, leading to the subsequent proteasomal degradation of N-Cor complex, thereby allowing cofactor exchange, and transcription activation. This Homo sapiens (Human) protein is F-box-like/WD repeat-containing protein TBL1XR1 (TBL1XR1).